We begin with the raw amino-acid sequence, 845 residues long: Beta-galactosidase 11 (845 aa).

The N-terminal stretch at 1 to 26 (MRKHSLDRWLLTAVLVVLLSSSSSFA) is a signal peptide. A glycan (N-linked (GlcNAc...) asparagine) is linked at asparagine 104. Glutamate 197 serves as the catalytic Proton donor. Residue glutamate 268 is the Nucleophile of the active site. Residues asparagine 269, asparagine 300, asparagine 395, asparagine 752, asparagine 784, and asparagine 814 are each glycosylated (N-linked (GlcNAc...) asparagine). The SUEL-type lectin domain maps to 751-840 (DNVSLTATLK…KMLAVQVKCG (90 aa)).

The protein belongs to the glycosyl hydrolase 35 family.

The protein localises to the secreted. Its subcellular location is the extracellular space. It localises to the apoplast. It carries out the reaction Hydrolysis of terminal non-reducing beta-D-galactose residues in beta-D-galactosides.. This chain is Beta-galactosidase 11 (BGAL11), found in Arabidopsis thaliana (Mouse-ear cress).